Consider the following 383-residue polypeptide: ATP phosphoribosyltransferase regulatory subunit (383 aa).

It belongs to the class-II aminoacyl-tRNA synthetase family. HisZ subfamily. In terms of assembly, heteromultimer composed of HisG and HisZ subunits.

It localises to the cytoplasm. Its pathway is amino-acid biosynthesis; L-histidine biosynthesis; L-histidine from 5-phospho-alpha-D-ribose 1-diphosphate: step 1/9. In terms of biological role, required for the first step of histidine biosynthesis. May allow the feedback regulation of ATP phosphoribosyltransferase activity by histidine. The polypeptide is ATP phosphoribosyltransferase regulatory subunit (Paraburkholderia phytofirmans (strain DSM 17436 / LMG 22146 / PsJN) (Burkholderia phytofirmans)).